Consider the following 157-residue polypeptide: UPF0262 protein Rleg2_0240 (157 aa).

The protein belongs to the UPF0262 family.

This Rhizobium leguminosarum bv. trifolii (strain WSM2304) protein is UPF0262 protein Rleg2_0240.